Here is a 185-residue protein sequence, read N- to C-terminus: Elongation factor P (185 aa).

The protein belongs to the elongation factor P family.

Its subcellular location is the cytoplasm. The protein operates within protein biosynthesis; polypeptide chain elongation. Its function is as follows. Involved in peptide bond synthesis. Stimulates efficient translation and peptide-bond synthesis on native or reconstituted 70S ribosomes in vitro. Probably functions indirectly by altering the affinity of the ribosome for aminoacyl-tRNA, thus increasing their reactivity as acceptors for peptidyl transferase. The polypeptide is Elongation factor P (Paraburkholderia phytofirmans (strain DSM 17436 / LMG 22146 / PsJN) (Burkholderia phytofirmans)).